We begin with the raw amino-acid sequence, 236 residues long: Rab-like protein 3 (236 aa).

Residues 1–236 are small GTPase-like; it reads MASLDRVKVL…AGTLKSLHYD (236 aa). GTP contacts are provided by residues 16–21, 148–150, and 179–180; these read GVGKSS, KLD, and DC.

The protein belongs to the small GTPase superfamily. Rab family. In terms of assembly, homodimer. Interacts with GPR89; the interaction stabilizes GPR89. Interacts with RAP1GDS1.

In terms of biological role, required for KRAS signaling regulation and modulation of cell proliferation. Regulator of KRAS prenylation, and probably prenylation of other small GTPases. Required for lymphocyte development and function. Not required for myeloid cell development. The protein is Rab-like protein 3 (RABL3) of Homo sapiens (Human).